The primary structure comprises 507 residues: Chromosomal replication initiator protein DnaA (507 aa).

The tract at residues 1–87 (MSVELWQQCV…IGSKRSSAPR (87 aa)) is domain I, interacts with DnaA modulators. Positions 85–110 (APRAAPNAPLAAAQVSQAQANAAPAS) are enriched in low complexity. A disordered region spans residues 85–158 (APRAAPNAPL…QQAPVRAEQR (74 aa)). The tract at residues 87–170 (RAAPNAPLAA…QVEGALKHTS (84 aa)) is domain II. Positions 126 to 140 (QKTEEISEEPSRDSF) are enriched in basic and acidic residues. The tract at residues 171 to 387 (YLNRTFTFEN…GALKRVIAHS (217 aa)) is domain III, AAA+ region. ATP is bound by residues G215, G217, K218, and T219. Positions 388–507 (HFMGRDITIE…YKNLLRTLTT (120 aa)) are domain IV, binds dsDNA.

This sequence belongs to the DnaA family. As to quaternary structure, oligomerizes as a right-handed, spiral filament on DNA at oriC.

Its subcellular location is the cytoplasm. Plays an essential role in the initiation and regulation of chromosomal replication. ATP-DnaA binds to the origin of replication (oriC) to initiate formation of the DNA replication initiation complex once per cell cycle. Binds the DnaA box (a 9 base pair repeat at the origin) and separates the double-stranded (ds)DNA. Forms a right-handed helical filament on oriC DNA; dsDNA binds to the exterior of the filament while single-stranded (ss)DNA is stabiized in the filament's interior. The ATP-DnaA-oriC complex binds and stabilizes one strand of the AT-rich DNA unwinding element (DUE), permitting loading of DNA polymerase. After initiation quickly degrades to an ADP-DnaA complex that is not apt for DNA replication. Binds acidic phospholipids. This Pseudomonas fluorescens (strain Pf0-1) protein is Chromosomal replication initiator protein DnaA.